Reading from the N-terminus, the 564-residue chain is Proline--tRNA ligase (564 aa).

This sequence belongs to the class-II aminoacyl-tRNA synthetase family. ProS type 1 subfamily. In terms of assembly, homodimer.

The protein resides in the cytoplasm. It catalyses the reaction tRNA(Pro) + L-proline + ATP = L-prolyl-tRNA(Pro) + AMP + diphosphate. Catalyzes the attachment of proline to tRNA(Pro) in a two-step reaction: proline is first activated by ATP to form Pro-AMP and then transferred to the acceptor end of tRNA(Pro). As ProRS can inadvertently accommodate and process non-cognate amino acids such as alanine and cysteine, to avoid such errors it has two additional distinct editing activities against alanine. One activity is designated as 'pretransfer' editing and involves the tRNA(Pro)-independent hydrolysis of activated Ala-AMP. The other activity is designated 'posttransfer' editing and involves deacylation of mischarged Ala-tRNA(Pro). The misacylated Cys-tRNA(Pro) is not edited by ProRS. The protein is Proline--tRNA ligase of Coxiella burnetii (strain Dugway 5J108-111).